The following is a 172-amino-acid chain: MSKKIAVLITDEFEDSEFTSPADEFRKAGHEVITIEKQAGKTVKGKKGEASVTIDKSIDEVTPAEFDALLLPGGHSPDYLRGDNRFVTFTRDFVNSGKPVFAICHGPQLLISADVIRGRKLTAVKPIIIDVKNAGAEFYDQEVVVDKDQLVTSRTPDDLPAFNREALRLLGA.

The 169-residue stretch at 3 to 171 (KKIAVLITDE…FNREALRLLG (169 aa)) folds into the PfpI endopeptidase domain. C104 serves as the catalytic Nucleophile.

It belongs to the peptidase C56 family. As to quaternary structure, exists in monomeric, trimeric, and hexameric forms.

It localises to the cytoplasm. It catalyses the reaction N(omega)-(1-hydroxy-2-oxopropyl)-L-arginyl-[protein] + H2O = lactate + L-arginyl-[protein] + H(+). The catalysed reaction is N(6)-(1-hydroxy-2-oxopropyl)-L-lysyl-[protein] + H2O = lactate + L-lysyl-[protein] + H(+). The enzyme catalyses S-(1-hydroxy-2-oxopropyl)-L-cysteinyl-[protein] + H2O = lactate + L-cysteinyl-[protein] + H(+). It carries out the reaction N(omega)-(1-hydroxy-2-oxoethyl)-L-arginyl-[protein] + H2O = L-arginyl-[protein] + glycolate + H(+). It catalyses the reaction N(6)-(1-hydroxy-2-oxoethyl)-L-lysyl-[protein] + H2O = glycolate + L-lysyl-[protein] + H(+). The catalysed reaction is S-(1-hydroxy-2-oxoethyl)-L-cysteinyl-[protein] + H2O = glycolate + L-cysteinyl-[protein] + H(+). The enzyme catalyses N(2)-(1-hydroxy-2-oxopropyl)-dGTP + H2O = lactate + dGTP + H(+). It carries out the reaction N(2)-(1-hydroxy-2-oxopropyl)-GTP + H2O = lactate + GTP + H(+). It catalyses the reaction N(2)-(1-hydroxy-2-oxopropyl)-GDP + H2O = lactate + GDP + H(+). The catalysed reaction is N(2)-(1-hydroxy-2-oxopropyl)-GMP + H2O = lactate + GMP + H(+). The enzyme catalyses N(2)-(1-hydroxy-2-oxoethyl)-dGTP + H2O = dGTP + glycolate + H(+). It carries out the reaction N(2)-(1-hydroxy-2-oxoethyl)-GTP + H2O = glycolate + GTP + H(+). It catalyses the reaction N(2)-(1-hydroxy-2-oxoethyl)-GDP + H2O = glycolate + GDP + H(+). The catalysed reaction is N(2)-(1-hydroxy-2-oxoethyl)-GMP + H2O = glycolate + GMP + H(+). The enzyme catalyses an N(2)-(1-hydroxy-2-oxopropyl)-guanosine in RNA + H2O = a guanosine in RNA + lactate + H(+). It carries out the reaction an N(2)-(1-hydroxy-2-oxopropyl)-2'-deoxyguanosine in DNA + H2O = a 2'-deoxyguanosine in DNA + lactate + H(+). It catalyses the reaction an N(2)-(1-hydroxy-2-oxoethyl)-guanosine in RNA + H2O = a guanosine in RNA + glycolate + H(+). The catalysed reaction is an N(2)-(1-hydroxy-2-oxoethyl)-2'-deoxyguanosine in DNA + H2O = a 2'-deoxyguanosine in DNA + glycolate + H(+). With respect to regulation, glyoxalase activity is inhibited by zinc ions at pH 7.0. Its function is as follows. Protein and nucleotide deglycase that catalyzes the deglycation of the Maillard adducts formed between amino groups of proteins or nucleotides and reactive carbonyl groups of glyoxals. Thus, functions as a protein deglycase that repairs methylglyoxal- and glyoxal-glycated proteins, and releases repaired proteins and lactate or glycolate, respectively. Deglycates cysteine, arginine and lysine residues in proteins, and thus reactivates these proteins by reversing glycation by glyoxals. Is able to repair glycated serum albumin, collagen, glyceraldehyde-3-phosphate dehydrogenase, and fructose biphosphate aldolase. Acts on early glycation intermediates (hemithioacetals and aminocarbinols), preventing the formation of advanced glycation endproducts (AGE) that cause irreversible damage. Also functions as a nucleotide deglycase able to repair glycated guanine in the free nucleotide pool (GTP, GDP, GMP, dGTP) and in DNA and RNA. Is thus involved in a major nucleotide repair system named guanine glycation repair (GG repair), dedicated to reversing methylglyoxal and glyoxal damage via nucleotide sanitization and direct nucleic acid repair. In vitro, prevents acrylamide formation in asparagine/glyoxal and asparagine/sugar mixtures at 55 degrees Celsius, likely by degrading asparagine/glyoxal Maillard adducts formed at high temperatures. Also displays an apparent glyoxalase activity that in fact reflects its deglycase activity. Is a general stress protein; is required for the protection of bacterial cells against many environmental stresses, including oxidative, thermal, osmotic, UV, and pH stresses. And plays an important role in protection against electrophile/carbonyl stress. This Escherichia coli (strain K12) protein is Protein/nucleic acid deglycase 2 (yhbO).